The following is a 706-amino-acid chain: Elongation factor G (706 aa).

The tr-type G domain occupies 8-290 (NRYRNIGICA…AVIDYLPAPT (283 aa)). GTP is bound by residues 17 to 24 (AHVDAGKT), 88 to 92 (DTPGH), and 142 to 145 (NKMD).

It belongs to the TRAFAC class translation factor GTPase superfamily. Classic translation factor GTPase family. EF-G/EF-2 subfamily.

The protein localises to the cytoplasm. Functionally, catalyzes the GTP-dependent ribosomal translocation step during translation elongation. During this step, the ribosome changes from the pre-translocational (PRE) to the post-translocational (POST) state as the newly formed A-site-bound peptidyl-tRNA and P-site-bound deacylated tRNA move to the P and E sites, respectively. Catalyzes the coordinated movement of the two tRNA molecules, the mRNA and conformational changes in the ribosome. The polypeptide is Elongation factor G (Stutzerimonas stutzeri (strain A1501) (Pseudomonas stutzeri)).